A 349-amino-acid polypeptide reads, in one-letter code: Anthranilate phosphoribosyltransferase (349 aa).

5-phospho-alpha-D-ribose 1-diphosphate-binding positions include G82, 85–86, 92–95, 110–118, and S122; these read GD, NVST, and KHGNRAVSG. Anthranilate is bound at residue G82. S94 contacts Mg(2+). An anthranilate-binding site is contributed by N113. Anthranilate is bound at residue R168. Mg(2+)-binding residues include D227 and E228.

The protein belongs to the anthranilate phosphoribosyltransferase family. In terms of assembly, homodimer. The cofactor is Mg(2+).

It carries out the reaction N-(5-phospho-beta-D-ribosyl)anthranilate + diphosphate = 5-phospho-alpha-D-ribose 1-diphosphate + anthranilate. The protein operates within amino-acid biosynthesis; L-tryptophan biosynthesis; L-tryptophan from chorismate: step 2/5. In terms of biological role, catalyzes the transfer of the phosphoribosyl group of 5-phosphorylribose-1-pyrophosphate (PRPP) to anthranilate to yield N-(5'-phosphoribosyl)-anthranilate (PRA). The protein is Anthranilate phosphoribosyltransferase of Pseudomonas entomophila (strain L48).